Here is a 360-residue protein sequence, read N- to C-terminus: MLVYLAEYLTRFYTGFNVFSYVTFRAILGLLTALIFSLWWGPKLIERLQLLQIGQVVRNDGPESHFSKRGTPTMGGLLILAAIFISVLLWGDLGSRYVWVMLFVLGSFGLIGFIDDYRKVVRKDTKGLIARWKYILQSLAALLIAFFLYATAANPGETQLVVPFFKDVMPQLGGVFIVLAYFTIVGSSNAVNLTDGLDGLAIMPTVMVAAAFALIAYLSGHVQFANYLHIPHLPGSGELVIVCTAIVGAGLGFLWFNTYPAQVFMGDVGSLSLGAALGAIAVLVRQEILLVIMGGVFVMETVSVILQVGSYKLRGQRIFRMAPIHHHYELKGWPEPRVIVRFWIISIFLVLLGLATLKLR.

10 helical membrane-spanning segments follow: residues 26-46 (AILG…KLIE), 74-94 (MGGL…GDLG), 97-117 (YVWV…IDDY), 134-154 (YILQ…TAAN), 168-188 (VMPQ…VGSS), 199-219 (GLAI…AYLS), 236-256 (SGEL…FLWF), 263-283 (VFMG…IAVL), 288-308 (ILLV…ILQV), and 338-358 (VIVR…ATLK).

Belongs to the glycosyltransferase 4 family. MraY subfamily. Mg(2+) is required as a cofactor.

The protein localises to the cell inner membrane. It carries out the reaction UDP-N-acetyl-alpha-D-muramoyl-L-alanyl-gamma-D-glutamyl-meso-2,6-diaminopimeloyl-D-alanyl-D-alanine + di-trans,octa-cis-undecaprenyl phosphate = di-trans,octa-cis-undecaprenyl diphospho-N-acetyl-alpha-D-muramoyl-L-alanyl-D-glutamyl-meso-2,6-diaminopimeloyl-D-alanyl-D-alanine + UMP. The protein operates within cell wall biogenesis; peptidoglycan biosynthesis. In terms of biological role, catalyzes the initial step of the lipid cycle reactions in the biosynthesis of the cell wall peptidoglycan: transfers peptidoglycan precursor phospho-MurNAc-pentapeptide from UDP-MurNAc-pentapeptide onto the lipid carrier undecaprenyl phosphate, yielding undecaprenyl-pyrophosphoryl-MurNAc-pentapeptide, known as lipid I. The polypeptide is Phospho-N-acetylmuramoyl-pentapeptide-transferase (Shewanella putrefaciens (strain CN-32 / ATCC BAA-453)).